Consider the following 97-residue polypeptide: Acylphosphatase (97 aa).

One can recognise an Acylphosphatase-like domain in the interval 9–97 (RKHIVVTGLV…ETARAFGVRQ (89 aa)). Catalysis depends on residues Arg24 and Asn42.

The protein belongs to the acylphosphatase family.

It carries out the reaction an acyl phosphate + H2O = a carboxylate + phosphate + H(+). The sequence is that of Acylphosphatase (acyP) from Bifidobacterium longum (strain NCC 2705).